We begin with the raw amino-acid sequence, 262 residues long: Acyl-[acyl-carrier-protein]--UDP-N-acetylglucosamine O-acyltransferase (262 aa).

The protein belongs to the transferase hexapeptide repeat family. LpxA subfamily. Homotrimer.

It is found in the cytoplasm. It carries out the reaction a (3R)-hydroxyacyl-[ACP] + UDP-N-acetyl-alpha-D-glucosamine = a UDP-3-O-[(3R)-3-hydroxyacyl]-N-acetyl-alpha-D-glucosamine + holo-[ACP]. It functions in the pathway glycolipid biosynthesis; lipid IV(A) biosynthesis; lipid IV(A) from (3R)-3-hydroxytetradecanoyl-[acyl-carrier-protein] and UDP-N-acetyl-alpha-D-glucosamine: step 1/6. Its function is as follows. Involved in the biosynthesis of lipid A, a phosphorylated glycolipid that anchors the lipopolysaccharide to the outer membrane of the cell. The sequence is that of Acyl-[acyl-carrier-protein]--UDP-N-acetylglucosamine O-acyltransferase from Haemophilus influenzae (strain ATCC 51907 / DSM 11121 / KW20 / Rd).